The following is a 242-amino-acid chain: uncharacterized protein (242 aa).

An HTH gntR-type domain is found at 8–76; sequence TPLYIQLKQI…QGKGTFVKSP (69 aa). A DNA-binding region (H-T-H motif) is located at residues 36–55; the sequence is ENELCTKYNVSRITVRKAIL.

This is an uncharacterized protein from Bacillus subtilis (strain 168).